A 188-amino-acid polypeptide reads, in one-letter code: Putative CC-type chemokine FPV060 (188 aa).

The protein belongs to the intercrine beta (chemokine CC) family. Highly divergent.

The chain is Putative CC-type chemokine FPV060 from Fowlpox virus (strain NVSL) (FPV).